Here is a 449-residue protein sequence, read N- to C-terminus: Tubulin beta-8 chain (449 aa).

GTP contacts are provided by Gln11, Glu69, Ser138, Gly142, Thr143, Gly144, Asn204, and Asn226. Glu69 is a binding site for Mg(2+). Residues 428 to 449 (ATADEEEGYEYEEDEVEVQEEQ) are disordered. Acidic residues predominate over residues 429–449 (TADEEEGYEYEEDEVEVQEEQ).

It belongs to the tubulin family. Dimer of alpha and beta chains. A typical microtubule is a hollow water-filled tube with an outer diameter of 25 nm and an inner diameter of 15 nM. Alpha-beta heterodimers associate head-to-tail to form protofilaments running lengthwise along the microtubule wall with the beta-tubulin subunit facing the microtubule plus end conferring a structural polarity. Microtubules usually have 13 protofilaments but different protofilament numbers can be found in some organisms and specialized cells. Mg(2+) serves as cofactor.

The protein resides in the cytoplasm. Its subcellular location is the cytoskeleton. Its function is as follows. Tubulin is the major constituent of microtubules, a cylinder consisting of laterally associated linear protofilaments composed of alpha- and beta-tubulin heterodimers. Microtubules grow by the addition of GTP-tubulin dimers to the microtubule end, where a stabilizing cap forms. Below the cap, tubulin dimers are in GDP-bound state, owing to GTPase activity of alpha-tubulin. This chain is Tubulin beta-8 chain (TUBB8), found in Arabidopsis thaliana (Mouse-ear cress).